We begin with the raw amino-acid sequence, 389 residues long: Chalcone synthase (389 aa).

Residue Cys-164 is part of the active site.

Belongs to the thiolase-like superfamily. Chalcone/stilbene synthases family.

It carries out the reaction (E)-4-coumaroyl-CoA + 3 malonyl-CoA + 3 H(+) = 2',4,4',6'-tetrahydroxychalcone + 3 CO2 + 4 CoA. Its pathway is secondary metabolite biosynthesis; flavonoid biosynthesis. Its function is as follows. The primary product of this enzyme is 4,2',4',6'-tetrahydroxychalcone (also termed naringenin-chalcone or chalcone) which can under specific conditions spontaneously isomerize into naringenin. This Casuarina glauca (Swamp oak) protein is Chalcone synthase (CHS1).